The primary structure comprises 297 residues: 4-diphosphocytidyl-2-C-methyl-D-erythritol kinase (297 aa).

Lysine 22 is a catalytic residue. Proline 111–serine 121 provides a ligand contact to ATP. Residue aspartate 153 is part of the active site.

Belongs to the GHMP kinase family. IspE subfamily.

The enzyme catalyses 4-CDP-2-C-methyl-D-erythritol + ATP = 4-CDP-2-C-methyl-D-erythritol 2-phosphate + ADP + H(+). Its pathway is isoprenoid biosynthesis; isopentenyl diphosphate biosynthesis via DXP pathway; isopentenyl diphosphate from 1-deoxy-D-xylulose 5-phosphate: step 3/6. Its function is as follows. Catalyzes the phosphorylation of the position 2 hydroxy group of 4-diphosphocytidyl-2C-methyl-D-erythritol. The sequence is that of 4-diphosphocytidyl-2-C-methyl-D-erythritol kinase from Polaromonas naphthalenivorans (strain CJ2).